A 471-amino-acid chain; its full sequence is Regulator of microtubule dynamics protein 3 (471 aa).

Topologically, residues 1-9 (MSSLGTLGG) are mitochondrial intermembrane. Residues 10 to 32 (ARAGLGLLLGTAAGLGFLCALYS) traverse the membrane as a helical segment. The Cytoplasmic segment spans residues 33–471 (QRWKRTQRRG…LEELEVILGE (439 aa)). Positions 39-70 (QRRGQSQSQSNSLDYTQTSEPGRQVRPLRAAP) are disordered. Low complexity predominate over residues 41-50 (RGQSQSQSNS). Ser-44, Ser-46, Ser-50, and Ser-57 each carry phosphoserine. The stretch at 90-123 (LDRLEFVLTSLVALRREVEELRSSLQGLAGQIVG) forms a coiled coil. The short motif at 156-162 (VYFTAAS) is the FFAT element. The residue at position 159 (Thr-159) is a Phosphothreonine. Positions 169-206 (AESEGGYTTANAESDYERDSERESDGDGEDEVSCETVK) are disordered. Phosphoserine is present on residues Ser-182, Ser-192, Ser-212, and Ser-233. A compositionally biased stretch (basic and acidic residues) spans 183-193 (DYERDSERESD).

The protein belongs to the RMDN family. Interacts with PTPN2. Interacts with microtubules. Interacts with VAPB. Interacts (via FFAT motif) with MOSPD2 (via MSP domain). Interacts (via phosphorylated FFAT motif) with MOSPD2, VAPA and VAPB. In terms of processing, phosphorylation at Thr-160 of the FFAT motif activates interaction with MOSPD2, VAPA and VAPB.

It is found in the mitochondrion outer membrane. The protein resides in the cytoplasm. Its subcellular location is the nucleus. The protein localises to the cytoskeleton. It localises to the spindle. It is found in the spindle pole. In terms of biological role, involved in cellular calcium homeostasis regulation. May participate in differentiation and apoptosis of keratinocytes. Overexpression induces apoptosis. This chain is Regulator of microtubule dynamics protein 3, found in Bos taurus (Bovine).